A 332-amino-acid chain; its full sequence is Fructose-1,6-bisphosphatase class 1 (332 aa).

4 residues coordinate Mg(2+): E89, D110, L112, and D113. Substrate-binding positions include 113–116 (DGSS), N206, Y239, 257–259 (YLY), and K269. E275 lines the Mg(2+) pocket.

Belongs to the FBPase class 1 family. As to quaternary structure, homotetramer. It depends on Mg(2+) as a cofactor.

The protein localises to the cytoplasm. The enzyme catalyses beta-D-fructose 1,6-bisphosphate + H2O = beta-D-fructose 6-phosphate + phosphate. The protein operates within carbohydrate biosynthesis; gluconeogenesis. This is Fructose-1,6-bisphosphatase class 1 from Erwinia tasmaniensis (strain DSM 17950 / CFBP 7177 / CIP 109463 / NCPPB 4357 / Et1/99).